Here is a 188-residue protein sequence, read N- to C-terminus: Cytidylate kinase (188 aa).

7-15 (GKIGSGKST) contributes to the ATP binding site.

Belongs to the cytidylate kinase family. Type 2 subfamily.

The protein resides in the cytoplasm. It catalyses the reaction CMP + ATP = CDP + ADP. It carries out the reaction dCMP + ATP = dCDP + ADP. This Thermoplasma acidophilum (strain ATCC 25905 / DSM 1728 / JCM 9062 / NBRC 15155 / AMRC-C165) protein is Cytidylate kinase (cmk).